The following is a 430-amino-acid chain: Ribosomal protein uS12 methylthiotransferase RimO (430 aa).

The MTTase N-terminal domain occupies 1–116 (MRVGIKVLGC…IANALEKGTD (116 aa)). [4Fe-4S] cluster is bound by residues Cys-10, Cys-46, Cys-79, Cys-148, Cys-152, and Cys-155. The region spanning 134–365 (LEERPYAYVK…LLQAEISNSR (232 aa)) is the Radical SAM core domain. The region spanning 367 to 430 (DRFIGRKLKF…DEYDMWGSVT (64 aa)) is the TRAM domain.

The protein belongs to the methylthiotransferase family. RimO subfamily. The cofactor is [4Fe-4S] cluster.

It is found in the cytoplasm. It carries out the reaction L-aspartate(89)-[ribosomal protein uS12]-hydrogen + (sulfur carrier)-SH + AH2 + 2 S-adenosyl-L-methionine = 3-methylsulfanyl-L-aspartate(89)-[ribosomal protein uS12]-hydrogen + (sulfur carrier)-H + 5'-deoxyadenosine + L-methionine + A + S-adenosyl-L-homocysteine + 2 H(+). Its function is as follows. Catalyzes the methylthiolation of an aspartic acid residue of ribosomal protein uS12. The protein is Ribosomal protein uS12 methylthiotransferase RimO of Thermotoga sp. (strain RQ2).